We begin with the raw amino-acid sequence, 208 residues long: Nascent polypeptide-associated complex subunit alpha (208 aa).

Positions 1–19 are enriched in basic and acidic residues; that stretch reads MSSSRIEELPDDDVPKTTV. Disordered stretches follow at residues 1–50 and 120–166; these read MSSS…HSRN and QLAA…VFDA. Residues 21–34 are compositionally biased toward acidic residues; the sequence is DAADSSESEVEGAE. The NAC-A/B domain maps to 48 to 113; sequence SRNEKKARKA…AKIEDLNSQA (66 aa). The segment covering 120-131 has biased composition (low complexity); sequence QLAAAEAAGSNE. The span at 132-154 shows a compositional bias: basic and acidic residues; that stretch reads HAGHDHASHDHGKGKAVESADKK. Acidic residues predominate over residues 155–164; the sequence is DEEEDDEEVF. The region spanning 169–208 is the UBA domain; sequence LEAKDIELVMAQASVSRNKAIKALKENDNDIVNSIMALSV.

The protein belongs to the NAC-alpha family. Part of the nascent polypeptide-associated complex (NAC), consisting of EGD2 and EGD1. NAC associates with ribosomes via EGD1.

The protein localises to the cytoplasm. It is found in the nucleus. Component of the nascent polypeptide-associated complex (NAC), a dynamic component of the ribosomal exit tunnel, protecting the emerging polypeptides from interaction with other cytoplasmic proteins to ensure appropriate nascent protein targeting. The NAC complex also promotes mitochondrial protein import by enhancing productive ribosome interactions with the outer mitochondrial membrane and blocks the inappropriate interaction of ribosomes translating non-secretory nascent polypeptides with translocation sites in the membrane of the endoplasmic reticulum. EGD2 may also be involved in transcription regulation. This Ajellomyces capsulatus (strain NAm1 / WU24) (Darling's disease fungus) protein is Nascent polypeptide-associated complex subunit alpha (EGD2).